Here is a 258-residue protein sequence, read N- to C-terminus: MTIIAAISCVFLFSILCETSALVLPNSTDLLLSNNNFTDIETALAAHLDSAKIPKARRKRYISQNDMIAILDYHNQVRGKVFPPASNMEYMVWDETLAKSAEAWAATCIWDHGPSYLLRFLGQNLSVRTGRYRSILQLVKPWYDEVKDYAFPYPQDCNPRCPMRCYGPMCTHYTQMVWATSNRIGCAIHTCQNMNVWGSVWRRAVYLVCNYAPKGNWIGEAPYKVGVPCSACPPSYGGSCTDNLCFPGVTSNYLYWFK.

The first 21 residues, 1 to 21 (MTIIAAISCVFLFSILCETSA), serve as a signal peptide directing secretion. Residues 22 to 60 (LVLPNSTDLLLSNNNFTDIETALAAHLDSAKIPKARRKR) constitute a propeptide that is removed on maturation. N-linked (GlcNAc...) asparagine glycosylation is found at N26, N36, and N124. Residues 71 to 211 (LDYHNQVRGK…RRAVYLVCNY (141 aa)) form the SCP domain.

This sequence belongs to the CRISP family.

Its subcellular location is the secreted. In terms of biological role, serine protease inhibitor which displays weak inhibitory activity against trypsin. May play a role in facial patterning during embryonic development. This Gallus gallus (Chicken) protein is Peptidase inhibitor 15 (PI15).